Reading from the N-terminus, the 214-residue chain is Variable small protein 24 (214 aa).

An N-terminal signal peptide occupies residues 1–18; that stretch reads MRKRISAIIMTLFMVFMS. A lipid anchor (N-palmitoyl cysteine) is attached at Cys-19. A lipid anchor (S-diacylglycerol cysteine) is attached at Cys-19. A disordered region spans residues 146–172; sequence TELGKKDASDDDTKKAIKKDNSDKTKG.

It belongs to the variable small protein (Vsp) family.

It is found in the cell outer membrane. The Vlp and Vsp proteins are antigenically distinct proteins, only one vlp or vsp gene is transcriptionally active at any one time. Switching between these genes is a mechanism of host immune response evasion. This chain is Variable small protein 24, found in Borrelia hermsii.